Here is a 699-residue protein sequence, read N- to C-terminus: Methylcrotonoyl-CoA carboxylase subunit alpha, mitochondrial (699 aa).

One can recognise a Biotin carboxylation domain in the interval 30-475; that stretch reads ITKILIANRG…ETGFIPIHRE (446 aa). Positions 144, 228, and 263 each coordinate ATP. In terms of domain architecture, ATP-grasp spans 148 to 345; that stretch reads KDIMIKAGVP…LVEWQLKVAE (198 aa). Arg-320 is a catalytic residue. One can recognise a Biotinyl-binding domain in the interval 624 to 699; the sequence is KGADGVLGSL…EDKKTLAVIV (76 aa). N6-biotinyllysine is present on Lys-665.

As to quaternary structure, probably a dodecamer composed of six biotin-containing alpha subunits and six beta subunits. Mn(2+) serves as cofactor. Biotin is required as a cofactor.

Its subcellular location is the mitochondrion matrix. The enzyme catalyses 3-methylbut-2-enoyl-CoA + hydrogencarbonate + ATP = 3-methyl-(2E)-glutaconyl-CoA + ADP + phosphate + H(+). It functions in the pathway amino-acid degradation; L-leucine degradation; (S)-3-hydroxy-3-methylglutaryl-CoA from 3-isovaleryl-CoA: step 2/3. Its function is as follows. Biotin-attachment subunit of the 3-methylcrotonyl-CoA carboxylase, an enzyme that catalyzes the conversion of 3-methylcrotonyl-CoA to 3-methylglutaconyl-CoA, a critical step for leucine and isovaleric acid catabolism. The chain is Methylcrotonoyl-CoA carboxylase subunit alpha, mitochondrial (mccA) from Dictyostelium discoideum (Social amoeba).